A 124-amino-acid chain; its full sequence is Large ribosomal subunit protein uL18 (124 aa).

This sequence belongs to the universal ribosomal protein uL18 family. Part of the 50S ribosomal subunit; part of the 5S rRNA/L5/L18/L25 subcomplex. Contacts the 5S and 23S rRNAs.

This is one of the proteins that bind and probably mediate the attachment of the 5S RNA into the large ribosomal subunit, where it forms part of the central protuberance. The chain is Large ribosomal subunit protein uL18 from Desulfosudis oleivorans (strain DSM 6200 / JCM 39069 / Hxd3) (Desulfococcus oleovorans).